Consider the following 92-residue polypeptide: Large ribosomal subunit protein eL43 (92 aa).

The C4-type zinc-finger motif lies at cysteine 39 to cysteine 60.

Belongs to the eukaryotic ribosomal protein eL43 family.

In Ostreococcus lucimarinus (strain CCE9901), this protein is Large ribosomal subunit protein eL43 (RPL37a).